The chain runs to 267 residues: N-acetylgalactosamine permease IIC component 1 (267 aa).

Residues 1–10 (MHEITLLQGL) lie on the Periplasmic side of the membrane. The region spanning 1–237 (MHEITLLQGL…VAVLGAGFAV (237 aa)) is the PTS EIIC type-4 domain. Residues 11–31 (SLAALVFVLGIDFWLEALFLF) form a helical membrane-spanning segment. The Cytoplasmic portion of the chain corresponds to 32–33 (RP). A helical transmembrane segment spans residues 34-54 (IIVCTLTGAILGDIQTGLITG). The Periplasmic portion of the chain corresponds to 55–66 (GLTELAFAGLTP). A helical transmembrane segment spans residues 67–87 (AGGVQPPNPIMAGLMTTVIAW). The Cytoplasmic segment spans residues 88-94 (STGVDAK). Residues 95 to 115 (TAIGLGLPFSLLMQYVILFFY) form a helical membrane-spanning segment. The Periplasmic portion of the chain corresponds to 116 to 141 (SAFSLFMTKADKCAKEADTAAFSRLN). The helical transmembrane segment at 142 to 162 (WTTMLIVASAYAVIAFLCTYL) threads the bilayer. Topologically, residues 163 to 177 (AQGAMQALVKAMPAW) are cytoplasmic. The helical transmembrane segment at 178–198 (LTHGFEVAGGILPAVGFGLLL) threads the bilayer. At 199 to 209 (RVMFKAQYIPY) the chain is on the periplasmic side. A helical transmembrane segment spans residues 210-230 (LIAGFLFVCYIQVSNLLPVAV). Topologically, residues 231–267 (LGAGFAVYEFFNAKSRQQAQPQPVASKNEEEDYSNGI) are cytoplasmic.

It is found in the cell inner membrane. The phosphoenolpyruvate-dependent sugar phosphotransferase system (PTS), a major carbohydrate active -transport system, catalyzes the phosphorylation of incoming sugar substrates concomitant with their translocation across the cell membrane. This system is involved in N-acetylgalactosamine transport. The chain is N-acetylgalactosamine permease IIC component 1 (agaC) from Escherichia coli (strain K12).